Consider the following 90-residue polypeptide: MHGPKPTVKDIELDLAPEAVPLVCNEQLDSSDEEDCIDVVEPAQQAYRVVTLCTKCSTTLRLVVESSEADIRAFQELLLRTLKIVCPRCA.

Positions 1–41 (MHGPKPTVKDIELDLAPEAVPLVCNEQLDSSDEEDCIDVVE) are E7 terminal domain. Positions 22–26 (LVCNE) match the LXCXE motif; interaction with host RB1 and TMEM173/STING motif. A zinc finger lies at 53-89 (CTKCSTTLRLVVESSEADIRAFQELLLRTLKIVCPRC). The short motif at 71–79 (IRAFQELLL) is the Nuclear export signal element.

It belongs to the papillomaviridae E7 protein family. In terms of assembly, homodimer. Homooligomer. Interacts with host RB1; this interaction induces dissociation of RB1-E2F1 complex thereby disrupting RB1 activity. Interacts with host EP300; this interaction represses EP300 transcriptional activity. Interacts with protein E2; this interaction inhibits E7 oncogenic activity. Interacts with host TMEM173/STING; this interaction impairs the ability of TMEM173/STING to sense cytosolic DNA and promote the production of type I interferon (IFN-alpha and IFN-beta). Post-translationally, highly phosphorylated.

The protein localises to the host cytoplasm. It is found in the host nucleus. Plays a role in viral genome replication by driving entry of quiescent cells into the cell cycle. Stimulation of progression from G1 to S phase allows the virus to efficiently use the cellular DNA replicating machinery to achieve viral genome replication. E7 protein has both transforming and trans-activating activities. Induces the disassembly of the E2F1 transcription factor from RB1, with subsequent transcriptional activation of E2F1-regulated S-phase genes. Interferes with host histone deacetylation mediated by HDAC1 and HDAC2, leading to transcription activation. Also plays a role in the inhibition of both antiviral and antiproliferative functions of host interferon alpha. Interaction with host TMEM173/STING impairs the ability of TMEM173/STING to sense cytosolic DNA and promote the production of type I interferon (IFN-alpha and IFN-beta). The sequence is that of Protein E7 from Homo sapiens (Human).